The chain runs to 75 residues: Putative sulfur carrier protein YrkI (75 aa).

C14 functions as the Cysteine persulfide intermediate in the catalytic mechanism.

This sequence belongs to the sulfur carrier protein TusA family.

The sequence is that of Putative sulfur carrier protein YrkI (yrkI) from Bacillus subtilis (strain 168).